The sequence spans 282 residues: Anamorsin homolog (282 aa).

The interval 1–140 (MADLQGKAVL…KPVYEVGAAA (140 aa)) is N-terminal SAM-like domain. A linker region spans residues 141–192 (PLKLSFAKKKQSGAAAPAAQVAEVWTIATDDFDDDDLLENDGDELLDAEDLA). Positions 203, 214, 217, and 219 each coordinate [2Fe-2S] cluster. The fe-S binding site A stretch occupies residues 203–219 (CEVGAGGKRRACKNCTC). Positions 243, 246, 254, and 257 each coordinate [4Fe-4S] cluster. 2 short sequence motifs (cx2C motif) span residues 243–246 (CGNC) and 254–257 (CASC). The segment at 243-257 (CGNCYLGDAFRCASC) is fe-S binding site B.

Belongs to the anamorsin family. As to quaternary structure, monomer. Requires [2Fe-2S] cluster as cofactor. The cofactor is [4Fe-4S] cluster.

The protein localises to the cytoplasm. It is found in the mitochondrion intermembrane space. Component of the cytosolic iron-sulfur (Fe-S) protein assembly (CIA) machinery. Required for the maturation of extramitochondrial Fe-S proteins. Part of an electron transfer chain functioning in an early step of cytosolic Fe-S biogenesis, facilitating the de novo assembly of a [4Fe-4S] cluster on the cytosolic Fe-S scaffold complex. Electrons are transferred from NADPH via a FAD- and FMN-containing diflavin oxidoreductase. Together with the diflavin oxidoreductase, also required for the assembly of the diferric tyrosyl radical cofactor of ribonucleotide reductase (RNR), probably by providing electrons for reduction during radical cofactor maturation in the catalytic small subunit. The chain is Anamorsin homolog from Monosiga brevicollis (Choanoflagellate).